The sequence spans 247 residues: 2,3-bisphosphoglycerate-dependent phosphoglycerate mutase (247 aa).

Substrate contacts are provided by residues 8–15 (RHGESTWN), 21–22 (TG), Arg60, 87–90 (ERHY), Lys98, 114–115 (RR), and 183–184 (GN). The active-site Tele-phosphohistidine intermediate is His9. The active-site Proton donor/acceptor is the Glu87.

The protein belongs to the phosphoglycerate mutase family. BPG-dependent PGAM subfamily. In terms of assembly, homodimer.

It catalyses the reaction (2R)-2-phosphoglycerate = (2R)-3-phosphoglycerate. It functions in the pathway carbohydrate degradation; glycolysis; pyruvate from D-glyceraldehyde 3-phosphate: step 3/5. Catalyzes the interconversion of 2-phosphoglycerate and 3-phosphoglycerate. This is 2,3-bisphosphoglycerate-dependent phosphoglycerate mutase from Albidiferax ferrireducens (strain ATCC BAA-621 / DSM 15236 / T118) (Rhodoferax ferrireducens).